A 220-amino-acid chain; its full sequence is VQ motif-containing protein 5 (220 aa).

The VQ signature appears at 49–57; that stretch reads FKSLVQQLT. Disordered stretches follow at residues 61-80 and 131-171; these read PCDR…PEPI and HMMA…GASS. Polar residues-rich tracts occupy residues 133 to 150 and 157 to 171; these read MAQS…QSNG and SWFN…GASS.

It is found in the nucleus. Its function is as follows. May function as negative regulator of plant defense. The protein is VQ motif-containing protein 5 of Arabidopsis thaliana (Mouse-ear cress).